A 546-amino-acid polypeptide reads, in one-letter code: Chaperonin GroEL (546 aa).

ATP contacts are provided by residues 29 to 32, K50, 86 to 90, G414, and D492; these read TMGP and DGTTT.

Belongs to the chaperonin (HSP60) family. Forms a cylinder of 14 subunits composed of two heptameric rings stacked back-to-back. Interacts with the co-chaperonin GroES.

The protein localises to the cytoplasm. It catalyses the reaction ATP + H2O + a folded polypeptide = ADP + phosphate + an unfolded polypeptide.. In terms of biological role, together with its co-chaperonin GroES, plays an essential role in assisting protein folding. The GroEL-GroES system forms a nano-cage that allows encapsulation of the non-native substrate proteins and provides a physical environment optimized to promote and accelerate protein folding. The chain is Chaperonin GroEL from Helicobacter pylori (strain ATCC 700392 / 26695) (Campylobacter pylori).